The chain runs to 345 residues: Protoheme IX farnesyltransferase (345 aa).

Transmembrane regions (helical) follow at residues 33–53 (VMSL…TPIH), 54–74 (PLLG…SGAL), 105–125 (ATLG…AINW), 126–146 (LAAG…TMWL), 154–174 (IVIG…AATG), 182–202 (LMVL…SLYI), 226–246 (QILL…FTGL), 247–267 (GGWL…TLAV), and 315–335 (ILYL…GLPI).

Belongs to the UbiA prenyltransferase family. Protoheme IX farnesyltransferase subfamily.

The protein localises to the cell inner membrane. It catalyses the reaction heme b + (2E,6E)-farnesyl diphosphate + H2O = Fe(II)-heme o + diphosphate. It functions in the pathway porphyrin-containing compound metabolism; heme O biosynthesis; heme O from protoheme: step 1/1. Converts heme B (protoheme IX) to heme O by substitution of the vinyl group on carbon 2 of heme B porphyrin ring with a hydroxyethyl farnesyl side group. The polypeptide is Protoheme IX farnesyltransferase (Caulobacter sp. (strain K31)).